The chain runs to 66 residues: MSQSNYRPSVPRWVGDILELDKKRRQNQYRGSLTSGQEKKDWDEWKRRYSRKLKYARLNGWTIEEE.

This Bacillus subtilis (strain 168) protein is SPbeta prophage-derived uncharacterized protein YosK (yosK).